Reading from the N-terminus, the 637-residue chain is Sodium-dependent phosphate transport protein 2A (637 aa).

At 1-103 the chain is on the cytoplasmic side; sequence MMSYSERLGG…LAQVGTKLLK (103 aa). Ser-14 and Ser-34 each carry phosphoserine. Residues 104 to 125 form a helical membrane-spanning segment; that stretch reads VPLMLAFLYLFVCSLDVLSSAF. The Extracellular segment spans residues 126–145; sequence QLAGGKVAGDIFKDNAILSN. The helical transmembrane segment at 146–163 threads the bilayer; that stretch reads PVAGLVVGILVTVLVQSS. At 164–165 the chain is on the cytoplasmic side; the sequence is ST. Residues 166–185 traverse the membrane as a helical segment; the sequence is STSIIVSMVSSGLLEVSSAI. The Extracellular portion of the chain corresponds to 186–345; the sequence is PIIMGSNIGT…HIFVDTGLPD (160 aa). 2 cysteine pairs are disulfide-bonded: Cys-225–Cys-520 and Cys-306–Cys-334. 2 N-linked (GlcNAc...) asparagine glycosylation sites follow: Asn-298 and Asn-328. A helical membrane pass occupies residues 346 to 368; that stretch reads LAVGLILLAGSLVVLCTCLILLV. The Cytoplasmic portion of the chain corresponds to 369 to 410; it reads KMLNSLLKGQVMSSRRSSTQTDFPAPFTWVTGYFAMVVGASM. A helical membrane pass occupies residues 411–434; it reads TFVVQSSSVFTSAITPLIGLGVIS. At 435 to 464 the chain is on the extracellular side; sequence IERAYPLTLGSNIGTTTTAILAALASPREK. A helical membrane pass occupies residues 465-485; it reads LSSSFQIALCHFFFNISGILL. Residues 486-511 lie on the Cytoplasmic side of the membrane; it reads WYPLPCTRLPIRMAKALGKRTAKYRW. Phosphothreonine; by PKC is present on Thr-506. Residues 512-532 traverse the membrane as a helical segment; it reads FAVLYLLVCFLLLPSLVFGIS. Topologically, residues 533–537 are extracellular; the sequence is MAGWQ. Residues 538-559 form a helical membrane-spanning segment; sequence AMVGVGTPFGALLAFVVLVNVL. Topologically, residues 560-637 are cytoplasmic; that stretch reads QSRSPGHLPK…LPAHHNATRL (78 aa). Ser-605 is modified (phosphoserine). Thr-621 carries the phosphothreonine modification. Ser-623 is subject to Phosphoserine.

Belongs to the SLC34A transporter family. As to quaternary structure, interacts via its C-terminal region with NHERF4. Interacts with NHERF1. Interacts with TMEM174; regulates SLC34A1 internalization by PTH and FGF23. In terms of tissue distribution, kidney.

The protein localises to the apical cell membrane. The protein resides in the cell membrane. The enzyme catalyses 3 Na(+)(out) + phosphate(out) = 3 Na(+)(in) + phosphate(in). Functionally, involved in actively transporting phosphate into cells via Na(+) cotransport in the renal brush border membrane. The cotransport has a Na(+):Pi stoichiometry of 3:1 and is electrogenic. The protein is Sodium-dependent phosphate transport protein 2A of Mus musculus (Mouse).